The following is a 1038-amino-acid chain: MEENTAQKQSNATGLQRHVSGRWISNVPSYEGNEWSSEESESEDKESNLTSSENIGKNPERELNSDGTDRIIEEEEEEDDIENEASSFSEQSENENYDFSYPGTFVYRKAASSSHETLATKVVSADESARLWAEKRRFLLQKLGKDPNSKPIDYKSSMASSSTRSSQSSQVSAIQPQSQDDNRVSDIRQMENRRELNVKRRSVSSPAEDLAIRPLSFSRYKKAEEIPESLPPIKGRDSFSSVRELNESNVFARAPNKNRFSFASVAETGSGSNFSRATSSRSSKTRSVVYEPNHRHTSFFGDTLSNLSSSLNDKKSPNDDHAVLDSELMEQTLPDSAEAVEIANNVKEDIVSTANDDANELDNTSEKATLETSSKPVTEQAIEQSEVVQEVEEGDTNMTTNTILKPTDEIINKGYAYSITSSHSNHSNEKFEQIPSPDEKLSRTDIDTHVKQLQTTKSTDSLSIPFVESPQQNPEEELSDSLSNDFGIDAEKEKDENLSKPEHHPSITSVNSPFLYSPSKQPSGELDEENLKLRLQDSDVDDEVATIRSLKQNNATNSEVETVTNDPSFSQQPGTHSRILRNFDAISSIDSIPDSFSDSAVDLPVDSSKYTLVGKTQSNSNLLQDNAEKHISKSNLEKVDVKGDTSPNSVEQGIEPQAASVVGSPRSSLVSNNSLEEGALLKNSESLESIYGYLSEEPDPALTKLNTEDPFWTKGSSDDEHTIASVEQDVYPYKTSLPTIVEATTSHTESSNSKAPAIEETTTTKVEVVAAHDAVSISSNSSTHKSHSEPLNRDELEVAALSRGSLPEPPKPNKQIVVQEEDQRDTLSLKTSTTGLSSHSKSAENNSTQQSTTSPSINSGASADAVSSGISKKADNSETNLNYFATLDAFVKSPLMSFDGLGELGSTDQRYNFFNQKIQEYSAYDSGLDNWIQFCLEKDGEAPKEAPPPPRSEPVSTTTKLAKRITQPSLSPARSTVTITHNIATEAKKKSKSAANDILHLFKKKAKSEQSNAKSSSSSIKESKKMKTLFGKKLGFKS.

Polar residues predominate over residues 1-14 (MEENTAQKQSNATG). The interval 1-100 (MEENTAQKQS…QSENENYDFS (100 aa)) is disordered. Residues 58 to 71 (NPERELNSDGTDRI) are compositionally biased toward basic and acidic residues. Positions 72-83 (IEEEEEEDDIEN) are enriched in acidic residues. A phosphoserine mark is found at Ser112, Ser113, and Ser114. Disordered regions lie at residues 144–201 (GKDP…VKRR), 360–381 (ELDN…TEQA), 422–441 (SHSN…DEKL), 454–526 (QTTK…SGEL), and 556–575 (TNSE…QPGT). Low complexity predominate over residues 156–179 (SSMASSSTRSSQSSQVSAIQPQSQ). Over residues 180–198 (DDNRVSDIRQMENRRELNV) the composition is skewed to basic and acidic residues. Composition is skewed to basic and acidic residues over residues 426–441 (HSNE…DEKL) and 489–505 (DAEK…EHHP). Ser436 carries the post-translational modification Phosphoserine. Residues 506–522 (SITSVNSPFLYSPSKQP) are compositionally biased toward polar residues. 2 positions are modified to phosphoserine: Ser618 and Ser856. Disordered stretches follow at residues 803-864 (RGSL…ASAD), 940-974 (GEAP…SPAR), and 1005-1024 (KAKS…KESK). The span at 826-859 (TLSLKTSTTGLSSHSKSAENNSTQQSTTSPSINS) shows a compositional bias: low complexity. Positions 955–974 (VSTTTKLAKRITQPSLSPAR) are enriched in polar residues. Residues 1009-1020 (EQSNAKSSSSSI) are compositionally biased toward low complexity.

Its subcellular location is the cytoplasm. This is an uncharacterized protein from Schizosaccharomyces pombe (strain 972 / ATCC 24843) (Fission yeast).